Reading from the N-terminus, the 438-residue chain is Methylenetetrahydrofolate--tRNA-(uracil-5-)-methyltransferase TrmFO (438 aa).

9-14 contacts FAD; that stretch reads GAGLAG.

It belongs to the MnmG family. TrmFO subfamily. FAD is required as a cofactor.

The protein resides in the cytoplasm. The enzyme catalyses uridine(54) in tRNA + (6R)-5,10-methylene-5,6,7,8-tetrahydrofolate + NADH + H(+) = 5-methyluridine(54) in tRNA + (6S)-5,6,7,8-tetrahydrofolate + NAD(+). It carries out the reaction uridine(54) in tRNA + (6R)-5,10-methylene-5,6,7,8-tetrahydrofolate + NADPH + H(+) = 5-methyluridine(54) in tRNA + (6S)-5,6,7,8-tetrahydrofolate + NADP(+). Its function is as follows. Catalyzes the folate-dependent formation of 5-methyl-uridine at position 54 (M-5-U54) in all tRNAs. This is Methylenetetrahydrofolate--tRNA-(uracil-5-)-methyltransferase TrmFO from Lactobacillus acidophilus (strain ATCC 700396 / NCK56 / N2 / NCFM).